The primary structure comprises 88 residues: Alpha-latrotoxin associated low molecular weight protein (88 aa).

The signal sequence occupies residues 1-18; that stretch reads MSKLFFVAFLCLIISVFA.

The protein belongs to the arthropod CHH/MIH/GIH/VIH hormone family. In terms of tissue distribution, expressed by the venom gland.

The protein localises to the secreted. Functionally, may increase the toxicity of alpha-latrotoxin and/or other venom components. Is non-toxic to mice and to the cockroach Periplaneta americana. In Latrodectus hesperus (Western black widow spider), this protein is Alpha-latrotoxin associated low molecular weight protein.